A 940-amino-acid chain; its full sequence is Isoleucine--tRNA ligase (940 aa).

Residues 58 to 68 (PYANGDIHIGH) carry the 'HIGH' region motif. L-isoleucyl-5'-AMP is bound at residue glutamate 564. Positions 605-609 (KMSKS) match the 'KMSKS' region motif. Residue lysine 608 coordinates ATP. Zn(2+)-binding residues include cysteine 903, cysteine 906, cysteine 923, and cysteine 926.

This sequence belongs to the class-I aminoacyl-tRNA synthetase family. IleS type 1 subfamily. Monomer. Zn(2+) serves as cofactor.

It localises to the cytoplasm. It carries out the reaction tRNA(Ile) + L-isoleucine + ATP = L-isoleucyl-tRNA(Ile) + AMP + diphosphate. Functionally, catalyzes the attachment of isoleucine to tRNA(Ile). As IleRS can inadvertently accommodate and process structurally similar amino acids such as valine, to avoid such errors it has two additional distinct tRNA(Ile)-dependent editing activities. One activity is designated as 'pretransfer' editing and involves the hydrolysis of activated Val-AMP. The other activity is designated 'posttransfer' editing and involves deacylation of mischarged Val-tRNA(Ile). This chain is Isoleucine--tRNA ligase, found in Shewanella piezotolerans (strain WP3 / JCM 13877).